The primary structure comprises 424 residues: Mitogen-activated protein kinase 9 (424 aa).

Positions Tyr26–Ile321 constitute a Protein kinase domain. Residues Ile32–Val40 and Lys55 each bind ATP. Residue Asp151 is the Proton acceptor of the active site. Phosphothreonine; by MAP2K7 is present on Thr183. The TXY signature appears at Thr183–Tyr185. Tyr185 is modified (phosphotyrosine; by MAP2K4). Residues Lys368 to Arg424 are disordered. The span at Ser388 to Thr417 shows a compositional bias: low complexity.

This sequence belongs to the protein kinase superfamily. CMGC Ser/Thr protein kinase family. MAP kinase subfamily. As to quaternary structure, interacts with MECOM. Interacts with DCLK2. Binds to at least four scaffolding proteins, MAPK8IP1/JIP-1, MAPK8IP2/JIP-2, MAPK8IP3/JIP-3/JSAP1 and SPAG9/MAPK8IP4/JIP-4. These proteins also bind other components of the JNK signaling pathway. Interacts with NFATC4. Interacts with ATF7; the interaction does not phosphorylate ATF7 but acts as a docking site for ATF7-associated partners such as JUN. Interacts with BCL10. Interacts with CTNNB1 and GSK3B. Interacts with MAPKBP1. Interacts with POU5F1; phosphorylates POU5F1 at 'Ser-355'. Found in a complex with SH3RF1, RAC2, MAP3K7/TAK1, MAP2K7/MKK7, MAPK8IP1/JIP1 and MAPK8/JNK1. Mg(2+) serves as cofactor. Post-translationally, dually phosphorylated on Thr-183 and Tyr-185 by MAP2K7 and MAP2K4, which activates the enzyme. Autophosphorylated in vitro.

The protein localises to the cytoplasm. It localises to the nucleus. It catalyses the reaction L-seryl-[protein] + ATP = O-phospho-L-seryl-[protein] + ADP + H(+). It carries out the reaction L-threonyl-[protein] + ATP = O-phospho-L-threonyl-[protein] + ADP + H(+). With respect to regulation, activated by threonine and tyrosine phosphorylation by either of two dual specificity kinases, MAP2K4 and MAP2K7. MAP2K4 shows a strong preference for Tyr-185 while MAP2K7 phosphorylates Tyr-183 preferentially. Inhibited by dual specificity phosphatases, such as DUSP1. Functionally, serine/threonine-protein kinase involved in various processes such as cell proliferation, differentiation, migration, transformation and programmed cell death. Extracellular stimuli such as pro-inflammatory cytokines or physical stress stimulate the stress-activated protein kinase/c-Jun N-terminal kinase (SAP/JNK) signaling pathway. In this cascade, two dual specificity kinases MAP2K4/MKK4 and MAP2K7/MKK7 phosphorylate and activate MAPK9/JNK2. In turn, MAPK9/JNK2 phosphorylates a number of transcription factors, primarily components of AP-1 such as JUN and ATF2 and thus regulates AP-1 transcriptional activity. In response to oxidative or ribotoxic stresses, inhibits rRNA synthesis by phosphorylating and inactivating the RNA polymerase 1-specific transcription initiation factor RRN3. Promotes stressed cell apoptosis by phosphorylating key regulatory factors including TP53 and YAP1. In T-cells, MAPK8 and MAPK9 are required for polarized differentiation of T-helper cells into Th1 cells. Upon T-cell receptor (TCR) stimulation, is activated by CARMA1, BCL10, MAP2K7 and MAP3K7/TAK1 to regulate JUN protein levels. Plays an important role in the osmotic stress-induced epithelial tight-junctions disruption. When activated, promotes beta-catenin/CTNNB1 degradation and inhibits the canonical Wnt signaling pathway. Also participates in neurite growth in spiral ganglion neurons. Phosphorylates the CLOCK-BMAL1 heterodimer and plays a role in the regulation of the circadian clock. Phosphorylates POU5F1, which results in the inhibition of POU5F1's transcriptional activity and enhances its proteasomal degradation. Phosphorylates ALKBH5 in response to reactive oxygen species (ROS), promoting ALKBH5 sumoylation and inactivation. MAPK9 isoforms display different binding patterns: alpha-1 and alpha-2 preferentially bind to JUN, whereas beta-1 and beta-2 bind to ATF2. However, there is no correlation between binding and phosphorylation, which is achieved at about the same efficiency by all isoforms. JUNB is not a substrate for JNK2 alpha-2, and JUND binds only weakly to it. This chain is Mitogen-activated protein kinase 9 (MAPK9), found in Homo sapiens (Human).